An 89-amino-acid polypeptide reads, in one-letter code: Large ribosomal subunit protein bL27 (89 aa).

Residues 1–24 (MAHKKGTGSTRNGRDSRSQRLGVK) form a disordered region.

The protein belongs to the bacterial ribosomal protein bL27 family.

The protein is Large ribosomal subunit protein bL27 of Microcystis aeruginosa (strain NIES-843 / IAM M-2473).